Here is a 288-residue protein sequence, read N- to C-terminus: Probable aquaporin PIP1-2 (288 aa).

The tract at residues 1 to 37 (MEGKEEDVRLGANKFSERQPIGTAAQGSDDKDYKEPP) is disordered. 2 helical membrane-spanning segments follow: residues 57-77 (IAEF…VMGV) and 92-114 (IAWS…SGGH). Residues 116–118 (NPA) carry the NPA 1 motif. 3 helical membrane passes run 135 to 155 (LFYM…VKGF), 177 to 197 (GDGL…VFSA), and 211 to 231 (ILAP…TIPI). The NPA 2 signature appears at 237–239 (NPA). The chain crosses the membrane as a helical span at residues 259–279 (IFWVGPFIGAALAAIYHQVVI).

Belongs to the MIP/aquaporin (TC 1.A.8) family. PIP (TC 1.A.8.11) subfamily. As to expression, expressed in roots, leaves and anthers.

Its subcellular location is the cell membrane. Its function is as follows. Aquaporins facilitate the transport of water and small neutral solutes across cell membranes. The sequence is that of Probable aquaporin PIP1-2 (PIP1-2) from Oryza sativa subsp. japonica (Rice).